The chain runs to 214 residues: Calcineurin B homologous protein 3 (214 aa).

Residue glycine 2 is the site of N-myristoyl glycine attachment. Residues 110–145 form the EF-hand domain; the sequence is FRKEKLKFLFHMYDADYDGIITLQEYKNVLDELMSG. The Ca(2+) site is built by aspartate 123, aspartate 125, aspartate 127, and glutamate 134.

It belongs to the calcineurin regulatory subunit family. CHP subfamily. Monomer. Homodimer. Expressed in the bipotential gonad by E4.5 and expressed in both the testis and ovary by E5.5, but with expression higher in the testis. Expressed in the testis cords but also at low levels in the interstitium. In the ovary, expression is principally in the ovarian cortex, but also in the medulla. Also expressed in the embryonic brain, with expression highest in the region between the nasal placode and olfactory bulb. Also expressed in the embryonic heart and tail.

The protein resides in the nucleus. The protein localises to the cytoplasm. It is found in the membrane. Its subcellular location is the cell membrane. It localises to the cell projection. The protein resides in the lamellipodium. The protein localises to the ruffle membrane. Its function is as follows. Functions as an integral cofactor in cell pH regulation by controlling plasma membrane-type Na(+)/H(+) exchange activity. Promotes the induction of hematopoietic stem cell differentiation toward megakaryocytic lineage. Essential for the coupling of ERK cascade activation with the expression of ETS family genes in megakaryocytic differentiation. Also involved in granulocytic differentiation in a ERK-dependent manner. Inhibits the phosphatase activity of calcineurin. The sequence is that of Calcineurin B homologous protein 3 from Gallus gallus (Chicken).